Here is a 254-residue protein sequence, read N- to C-terminus: Hemin import ATP-binding protein HmuV (254 aa).

Residues 2 to 239 (LNINQVNINL…DTLSQVWHYD (238 aa)) form the ABC transporter domain. 34 to 41 (GPNGAGKS) serves as a coordination point for ATP.

This sequence belongs to the ABC transporter superfamily. Heme (hemin) importer (TC 3.A.1.14.5) family. The complex is composed of two ATP-binding proteins (HmuV), two transmembrane proteins (HmuU) and a solute-binding protein (HmuT).

The protein resides in the cell inner membrane. Its function is as follows. Part of the ABC transporter complex HmuTUV involved in hemin import. Responsible for energy coupling to the transport system. This chain is Hemin import ATP-binding protein HmuV, found in Shewanella denitrificans (strain OS217 / ATCC BAA-1090 / DSM 15013).